We begin with the raw amino-acid sequence, 398 residues long: Succinyl-diaminopimelate desuccinylase (398 aa).

Position 68 (His68) interacts with Zn(2+). Residue Asp70 is part of the active site. Position 101 (Asp101) interacts with Zn(2+). Residue Glu135 is the Proton acceptor of the active site. Positions 136, 164, and 349 each coordinate Zn(2+).

The protein belongs to the peptidase M20A family. DapE subfamily. In terms of assembly, homodimer. The cofactor is Zn(2+). Co(2+) serves as cofactor.

It carries out the reaction N-succinyl-(2S,6S)-2,6-diaminopimelate + H2O = (2S,6S)-2,6-diaminopimelate + succinate. It functions in the pathway amino-acid biosynthesis; L-lysine biosynthesis via DAP pathway; LL-2,6-diaminopimelate from (S)-tetrahydrodipicolinate (succinylase route): step 3/3. Catalyzes the hydrolysis of N-succinyl-L,L-diaminopimelic acid (SDAP), forming succinate and LL-2,6-diaminopimelate (DAP), an intermediate involved in the bacterial biosynthesis of lysine and meso-diaminopimelic acid, an essential component of bacterial cell walls. This Wolbachia pipientis wMel protein is Succinyl-diaminopimelate desuccinylase.